We begin with the raw amino-acid sequence, 224 residues long: Response regulator protein GraR (224 aa).

One can recognise a Response regulatory domain in the interval 2–115; sequence QILLVEDDNT…VLIAKLQAIY (114 aa). A 4-aspartylphosphate modification is found at Asp51. The segment at residues 126 to 224 is a DNA-binding region (ompR/PhoB-type); that stretch reads KRTLTWQDAV…KVGKGYMAHE (99 aa). Phosphothreonine is present on residues Thr128, Thr130, and Thr149.

In terms of assembly, interacts with GraX. In terms of processing, phosphorylated by GraS. Phosphorylated by Stk1; phosphorylation increases the DNA-binding activity of GraR.

It localises to the cytoplasm. Functionally, member of the two-component regulatory system GraR/GraS involved in resistance against cationic antimicrobial peptides (CAMPs). Upon phosphorylation by GraS, functions as a transcription regulator by direct binding to promoter regions of target genes such as adhesins, exoproteins, transporters, toxins, and proteins involved in cell wall synthesis. Down-regulates the expression of many genes involved in RNA and amino acid synthesis or glycolysis. The polypeptide is Response regulator protein GraR (graR) (Staphylococcus aureus (strain USA300)).